Reading from the N-terminus, the 215-residue chain is N-(5'-phosphoribosyl)anthranilate isomerase (215 aa).

The protein belongs to the TrpF family.

It carries out the reaction N-(5-phospho-beta-D-ribosyl)anthranilate = 1-(2-carboxyphenylamino)-1-deoxy-D-ribulose 5-phosphate. It participates in amino-acid biosynthesis; L-tryptophan biosynthesis; L-tryptophan from chorismate: step 3/5. The sequence is that of N-(5'-phosphoribosyl)anthranilate isomerase from Parvibaculum lavamentivorans (strain DS-1 / DSM 13023 / NCIMB 13966).